The following is a 291-amino-acid chain: Phosphoribosylaminoimidazole-succinocarboxamide synthase (291 aa).

It belongs to the SAICAR synthetase family.

It catalyses the reaction 5-amino-1-(5-phospho-D-ribosyl)imidazole-4-carboxylate + L-aspartate + ATP = (2S)-2-[5-amino-1-(5-phospho-beta-D-ribosyl)imidazole-4-carboxamido]succinate + ADP + phosphate + 2 H(+). It functions in the pathway purine metabolism; IMP biosynthesis via de novo pathway; 5-amino-1-(5-phospho-D-ribosyl)imidazole-4-carboxamide from 5-amino-1-(5-phospho-D-ribosyl)imidazole-4-carboxylate: step 1/2. In Candida maltosa (Yeast), this protein is Phosphoribosylaminoimidazole-succinocarboxamide synthase (ADE1).